Reading from the N-terminus, the 45-residue chain is MSKRTFQPNNRRRAKTHGFRLRMRTRAGRAILASRRGKGRASLSA.

Belongs to the bacterial ribosomal protein bL34 family.

This Streptomyces avermitilis (strain ATCC 31267 / DSM 46492 / JCM 5070 / NBRC 14893 / NCIMB 12804 / NRRL 8165 / MA-4680) protein is Large ribosomal subunit protein bL34.